The primary structure comprises 215 residues: ATP phosphoribosyltransferase (215 aa).

This sequence belongs to the ATP phosphoribosyltransferase family. Short subfamily. Heteromultimer composed of HisG and HisZ subunits.

The protein resides in the cytoplasm. The catalysed reaction is 1-(5-phospho-beta-D-ribosyl)-ATP + diphosphate = 5-phospho-alpha-D-ribose 1-diphosphate + ATP. Its pathway is amino-acid biosynthesis; L-histidine biosynthesis; L-histidine from 5-phospho-alpha-D-ribose 1-diphosphate: step 1/9. Catalyzes the condensation of ATP and 5-phosphoribose 1-diphosphate to form N'-(5'-phosphoribosyl)-ATP (PR-ATP). Has a crucial role in the pathway because the rate of histidine biosynthesis seems to be controlled primarily by regulation of HisG enzymatic activity. This chain is ATP phosphoribosyltransferase, found in Lachnoclostridium phytofermentans (strain ATCC 700394 / DSM 18823 / ISDg) (Clostridium phytofermentans).